The following is a 565-amino-acid chain: MANPPFPLRSQVVTQGVQRSPNRAMLRAVGFRDEDFGKPIVGIANAHSTITPCNIGIQTLAERAEAALRAAGCMPQVFGTITISDGISMGTEGMKYSLVSREVIADSIETVVNGQSMDGLLAIGGCDKNMPGAMIAMARLNVPAIFVYGGTIKPGHYNGRDLTIVSAFEAVGEYSAGRISEDELLAVERHACPGAGSCGGMYTANTMSSAFEAMGMSLPYSSTMAAEDEEKAESAAQSAKVLAEAIQANIRPRDIITRQSIENAISVIMAVGGSTNAVLHFLAIAHAAEVPLTLDDFETIRARVPVLCDLKPSGRFVATDLHRAGGIPQVMKILLNHGLLHGDCLTISGQTIAEVLRDVPDEPSPDQEVIRPWHSPLYPQGHIAILKGNLAPEGAVAKISGVKTPKIAGPARVFNSEESCLQAILAGQIRPGDVVVIRYEGPKGGPGMREMLSPTSAIIGAGLGDSVGLITDGRFSGGTYGMVVGHVAPEAYVGGPIALVEEGDLITIDAPARLLHLHVSEEELARRRARWAPPEPRYKRGVLAKYAKLVSSSSLGAVTDLNLWD.

C53 contacts [2Fe-2S] cluster. D85 is a binding site for Mg(2+). C126 contacts [2Fe-2S] cluster. Mg(2+)-binding residues include D127 and K128. Residue K128 is modified to N6-carboxylysine. C198 serves as a coordination point for [2Fe-2S] cluster. E450 contributes to the Mg(2+) binding site. The active-site Proton acceptor is S476.

The protein belongs to the IlvD/Edd family. Homodimer. [2Fe-2S] cluster is required as a cofactor. Requires Mg(2+) as cofactor.

The enzyme catalyses (2R)-2,3-dihydroxy-3-methylbutanoate = 3-methyl-2-oxobutanoate + H2O. The catalysed reaction is (2R,3R)-2,3-dihydroxy-3-methylpentanoate = (S)-3-methyl-2-oxopentanoate + H2O. It functions in the pathway amino-acid biosynthesis; L-isoleucine biosynthesis; L-isoleucine from 2-oxobutanoate: step 3/4. The protein operates within amino-acid biosynthesis; L-valine biosynthesis; L-valine from pyruvate: step 3/4. Its function is as follows. Functions in the biosynthesis of branched-chain amino acids. Catalyzes the dehydration of (2R,3R)-2,3-dihydroxy-3-methylpentanoate (2,3-dihydroxy-3-methylvalerate) into 2-oxo-3-methylpentanoate (2-oxo-3-methylvalerate) and of (2R)-2,3-dihydroxy-3-methylbutanoate (2,3-dihydroxyisovalerate) into 2-oxo-3-methylbutanoate (2-oxoisovalerate), the penultimate precursor to L-isoleucine and L-valine, respectively. The protein is Dihydroxy-acid dehydratase of Synechococcus sp. (strain JA-3-3Ab) (Cyanobacteria bacterium Yellowstone A-Prime).